Consider the following 155-residue polypeptide: Ribosomal RNA large subunit methyltransferase H (155 aa).

Residues leucine 73, glycine 104, and leucine 123–leucine 128 contribute to the S-adenosyl-L-methionine site.

It belongs to the RNA methyltransferase RlmH family. As to quaternary structure, homodimer.

It is found in the cytoplasm. It catalyses the reaction pseudouridine(1915) in 23S rRNA + S-adenosyl-L-methionine = N(3)-methylpseudouridine(1915) in 23S rRNA + S-adenosyl-L-homocysteine + H(+). Specifically methylates the pseudouridine at position 1915 (m3Psi1915) in 23S rRNA. This Pseudomonas entomophila (strain L48) protein is Ribosomal RNA large subunit methyltransferase H.